The sequence spans 157 residues: Cyclic pyranopterin monophosphate synthase (157 aa).

Substrate contacts are provided by residues 74 to 76 and 111 to 112; these read MCH and ME. D126 is a catalytic residue.

It belongs to the MoaC family. As to quaternary structure, homohexamer; trimer of dimers.

The enzyme catalyses (8S)-3',8-cyclo-7,8-dihydroguanosine 5'-triphosphate = cyclic pyranopterin phosphate + diphosphate. It participates in cofactor biosynthesis; molybdopterin biosynthesis. Functionally, catalyzes the conversion of (8S)-3',8-cyclo-7,8-dihydroguanosine 5'-triphosphate to cyclic pyranopterin monophosphate (cPMP). In Carboxydothermus hydrogenoformans (strain ATCC BAA-161 / DSM 6008 / Z-2901), this protein is Cyclic pyranopterin monophosphate synthase.